The following is a 380-amino-acid chain: Gap junction gamma-1 protein (380 aa).

Residues 1–22 (MSWSFLTRLLDEISNHSTFVGK) are Cytoplasmic-facing. The chain crosses the membrane as a helical span at residues 23–45 (IWLTLFIIFRIVLTVVGGESIYY). Residues 46–75 (DEQSKFVCNTQQPGCENVCYDAFAPLSHVR) lie on the Extracellular side of the membrane. Residues 76–95 (FWVFQIILITTPTIMYLGFA) traverse the membrane as a helical segment. Over 96-171 (MHKIARSNDV…RRIKRDGLMK (76 aa)) the chain is Cytoplasmic. The chain crosses the membrane as a helical span at residues 172–194 (VYILQLLSRIIFEVGFLFGQYIL). Residues 195-228 (YGFEVAPSYVCTRSPCPHTVDCFVSRPTEKTIFL) are Extracellular-facing. The chain crosses the membrane as a helical span at residues 229 to 251 (LIMYAVSCLCLSLTVLEILHLGL). Topologically, residues 252 to 380 (SGIRDAFRRR…GSKCEKGIHA (129 aa)) are cytoplasmic. Residues 337-380 (AYQNGESSPSRSSSPESNGTAVEQNRLNFAQEKQGSKCEKGIHA) form a disordered region. Low complexity predominate over residues 342-353 (ESSPSRSSSPES). The span at 354–369 (NGTAVEQNRLNFAQEK) shows a compositional bias: polar residues. Residues 370–380 (QGSKCEKGIHA) are compositionally biased toward basic and acidic residues.

Belongs to the connexin family. Gamma-type subfamily. A connexon is composed of a hexamer of connexins.

Its subcellular location is the cell membrane. It localises to the cell junction. The protein resides in the gap junction. In terms of biological role, one gap junction consists of a cluster of closely packed pairs of transmembrane channels, the connexons, through which materials of low MW diffuse from one cell to a neighboring cell. Participates in a developmental pathway for formation of the notochord and tail. The polypeptide is Gap junction gamma-1 protein (gjc1) (Danio rerio (Zebrafish)).